We begin with the raw amino-acid sequence, 489 residues long: Siroheme synthase (489 aa).

Residues 1-203 form a precorrin-2 dehydrogenase /sirohydrochlorin ferrochelatase region; it reads MDFFPVFMRL…GREDAARETL (203 aa). NAD(+) is bound by residues 22–23 and 43–44; these read PV and PA. The segment at 218-489 is uroporphyrinogen-III C-methyltransferase; it reads GEVFLVGAGP…ARSSTEGAEA (272 aa). P227 contributes to the S-adenosyl-L-methionine binding site. Residue D250 is the Proton acceptor of the active site. K272 acts as the Proton donor in catalysis. S-adenosyl-L-methionine-binding positions include 303–305, I308, 333–334, M385, and G414; these read GGD and TA.

It in the N-terminal section; belongs to the precorrin-2 dehydrogenase / sirohydrochlorin ferrochelatase family. This sequence in the C-terminal section; belongs to the precorrin methyltransferase family.

The catalysed reaction is uroporphyrinogen III + 2 S-adenosyl-L-methionine = precorrin-2 + 2 S-adenosyl-L-homocysteine + H(+). It carries out the reaction precorrin-2 + NAD(+) = sirohydrochlorin + NADH + 2 H(+). It catalyses the reaction siroheme + 2 H(+) = sirohydrochlorin + Fe(2+). Its pathway is cofactor biosynthesis; adenosylcobalamin biosynthesis; precorrin-2 from uroporphyrinogen III: step 1/1. It functions in the pathway cofactor biosynthesis; adenosylcobalamin biosynthesis; sirohydrochlorin from precorrin-2: step 1/1. It participates in porphyrin-containing compound metabolism; siroheme biosynthesis; precorrin-2 from uroporphyrinogen III: step 1/1. The protein operates within porphyrin-containing compound metabolism; siroheme biosynthesis; siroheme from sirohydrochlorin: step 1/1. Its pathway is porphyrin-containing compound metabolism; siroheme biosynthesis; sirohydrochlorin from precorrin-2: step 1/1. Multifunctional enzyme that catalyzes the SAM-dependent methylations of uroporphyrinogen III at position C-2 and C-7 to form precorrin-2 via precorrin-1. Then it catalyzes the NAD-dependent ring dehydrogenation of precorrin-2 to yield sirohydrochlorin. Finally, it catalyzes the ferrochelation of sirohydrochlorin to yield siroheme. This chain is Siroheme synthase, found in Thioalkalivibrio sulfidiphilus (strain HL-EbGR7).